The sequence spans 327 residues: tRNA dimethylallyltransferase (327 aa).

14–21 (GPTASGKT) is an ATP binding site. Residue 16–21 (TASGKT) participates in substrate binding. Interaction with substrate tRNA stretches follow at residues 39-42 (DSAL) and 163-167 (QRIQR).

This sequence belongs to the IPP transferase family. Monomer. The cofactor is Mg(2+).

It catalyses the reaction adenosine(37) in tRNA + dimethylallyl diphosphate = N(6)-dimethylallyladenosine(37) in tRNA + diphosphate. Catalyzes the transfer of a dimethylallyl group onto the adenine at position 37 in tRNAs that read codons beginning with uridine, leading to the formation of N6-(dimethylallyl)adenosine (i(6)A). The polypeptide is tRNA dimethylallyltransferase (Xanthomonas oryzae pv. oryzae (strain PXO99A)).